The chain runs to 239 residues: tRNA (guanine-N(7)-)-methyltransferase (239 aa).

Positions 69, 94, 121, and 144 each coordinate S-adenosyl-L-methionine. Residue D144 is part of the active site. Substrate is bound at residue K148. The interaction with RNA stretch occupies residues 150 to 155 (RHNKRR). Substrate is bound by residues D180 and 217 to 220 (TKFE).

Belongs to the class I-like SAM-binding methyltransferase superfamily. TrmB family. Monomer.

The enzyme catalyses guanosine(46) in tRNA + S-adenosyl-L-methionine = N(7)-methylguanosine(46) in tRNA + S-adenosyl-L-homocysteine. It participates in tRNA modification; N(7)-methylguanine-tRNA biosynthesis. Functionally, catalyzes the formation of N(7)-methylguanine at position 46 (m7G46) in tRNA. This Escherichia coli O6:K15:H31 (strain 536 / UPEC) protein is tRNA (guanine-N(7)-)-methyltransferase.